Consider the following 175-residue polypeptide: VQ motif-containing protein 25 (175 aa).

The VQ signature appears at 50–59 (FRELVQSLTG).

The protein resides in the nucleus. May function as negative regulator of plant defense. The protein is VQ motif-containing protein 25 of Arabidopsis thaliana (Mouse-ear cress).